The chain runs to 277 residues: Large ribosomal subunit protein uL2 (277 aa).

3 disordered regions span residues 1–23 (MAIK…DFAE), 36–58 (PLHK…GGGH), and 219–277 (TVRG…RKNK). Positions 8–20 (PTSNGRRGMTSSD) are enriched in polar residues. The segment covering 258–277 (KTRKKKNKSDKFIVRRRKNK) has biased composition (basic residues).

The protein belongs to the universal ribosomal protein uL2 family. In terms of assembly, part of the 50S ribosomal subunit. Forms a bridge to the 30S subunit in the 70S ribosome.

In terms of biological role, one of the primary rRNA binding proteins. Required for association of the 30S and 50S subunits to form the 70S ribosome, for tRNA binding and peptide bond formation. It has been suggested to have peptidyltransferase activity; this is somewhat controversial. Makes several contacts with the 16S rRNA in the 70S ribosome. This chain is Large ribosomal subunit protein uL2, found in Bacillus licheniformis (strain ATCC 14580 / DSM 13 / JCM 2505 / CCUG 7422 / NBRC 12200 / NCIMB 9375 / NCTC 10341 / NRRL NRS-1264 / Gibson 46).